Reading from the N-terminus, the 2542-residue chain is Ankyrin repeat and KH domain-containing protein 1 (2542 aa).

At methionine 1 the chain carries N-acetylmethionine. Over residues 1-10 the composition is skewed to gly residues; that stretch reads MLTDSGGGGT. Disordered regions lie at residues 1-44 and 50-69; these read MLTD…IRTV and AGPASGVGSSGGGGSGSGTG. Over residues 20–29 the composition is skewed to low complexity; that stretch reads APRSAPAGAS. A compositionally biased stretch (gly residues) spans 57-69; it reads GSSGGGGSGSGTG. Phosphoserine occurs at positions 101 and 105. ANK repeat units lie at residues 204 to 233, 237 to 266, 271 to 300, 304 to 333, 337 to 366, 371 to 400, 404 to 433, 437 to 466, 470 to 499, 504 to 533, 534 to 563, 567 to 596, 600 to 629, 634 to 663, and 667 to 696; these read VDTRSLAEACSDGDVNAVRKLLDEGRSVNE, EGESLLCLACSAGYYELAQVLLAMHANVED, GDITPLMAASSGGYLDIVKLLLLHDADVNS, TGNTALTYACAGGFVDIVKVLLNEGANIED, NGHTPLMEAASAGHVEVARVLLDHGAGINT, FKESALTLACYKGHLDMVRFLLEAGADQEH, EMHTALMEACMDGHVEVARLLLDSGAQVNM, SFESPLTLAACGGHVELAALLIERGANLEE, EGYTPLMEAAREGHEEMVALLLAQGANINA, TQETALTLACCGGFSEVADFLIKAGADIEL, GCSTPLMEASQEGHLELVKYLLASGANVHA, TGDTALTYACENGHTDVADVLLQAGADLEH, GGRTPLMKAARAGHLCTVQFLISKGANVNR, NDHTVVSLACAGGHLAVVELLLAHGADPTH, and DGSTMLIEAAKGGHTNVVSYLLDYPNNVLS. Positions 775-852 form a coiled coil; the sequence is LECIVEETEG…RQLQMKTQQQ (78 aa). Position 803 is a phosphoserine (serine 803). ANK repeat units follow at residues 1054 to 1083, 1087 to 1116, 1121 to 1150, 1154 to 1183, 1189 to 1218, 1223 to 1252, 1256 to 1285, 1291 to 1320, 1324 to 1353, and 1357 to 1386; these read NHDTALTLACAGGHEELVSVLIARDAKIEH, KGFTPLILAATAGHVGVVEILLDKGGDIEA, TKDTPLSLACSGGRQEVVDLLLARGANKEH, SDYTPLSLAASGGYVNIIKILLNAGAEINS, LGISPLMLAAMNGHVPAVKLLLDMGSDINA, NRNTALTLACFQGRAEVVSLLLDRKANVEH, TGLTPLMEAASGGYAEVGRVLLDKGADVNA, SRDTALTIAADKGHYKFCELLIHRGAHIDV, KGNTPLWLASNGGHFDVVQLLVQAGADVDA, and RKITPLMSAFRKGHVKVVQYLVKEVNQFPS. The stretch at 1415–1485 forms a coiled coil; it reads KAKDQQAAEA…ENKPKENSEL (71 aa). 3 disordered regions span residues 1441–1517, 1534–1614, and 1632–1664; these read REES…TIGI, NVVT…SQEL, and SQEEKTSTATSKTQTRLEGEVTPNSLSTSYKTV. Basic residues predominate over residues 1453 to 1463; it reads REKRKEKRKKK. The span at 1464 to 1483 shows a compositional bias: basic and acidic residues; that stretch reads KEEQKRKQEEDEENKPKENS. Over residues 1484-1502 the composition is skewed to acidic residues; sequence ELPEDEDEEENDEDVEQEV. Residues 1503 to 1517 show a composition bias toward low complexity; it reads PIEPPSATTTTTIGI. Serine 1540 carries the post-translational modification Phosphoserine. Threonine 1553 is subject to Phosphothreonine. Positions 1590–1603 are enriched in low complexity; that stretch reads NSDSDNLDSTDCNS. Residues 1604–1614 show a composition bias toward polar residues; the sequence is ESSSGGKSQEL. Position 1632 is a phosphoserine (serine 1632). Residues 1638-1664 show a composition bias toward polar residues; that stretch reads STATSKTQTRLEGEVTPNSLSTSYKTV. Position 1653 is a phosphothreonine (threonine 1653). Residues 1695–1759 enclose the KH domain; it reads RRSKKLSVPA…ESTRYAVQLI (65 aa). 3 disordered regions span residues 1886 to 1923, 1987 to 2106, and 2260 to 2367; these read NTWGPFPVRPVNPGNTNSSPKHNNTSRLPNQNGTVLPS, PSVS…APLT, and NMHP…IPPP. Residues 1898-1922 show a composition bias toward polar residues; sequence PGNTNSSPKHNNTSRLPNQNGTVLP. The span at 1987–1996 shows a compositional bias: low complexity; the sequence is PSVSSAPITS. Residues 1997–2019 are compositionally biased toward polar residues; it reads GQAPTTFLPASTSQAQLSSQKME. The segment covering 2042–2077 has biased composition (low complexity); it reads CTPSSTANSCSSSASNTPGAPETHPSSSPTPTSSNT. Residues 2078–2106 show a composition bias toward polar residues; it reads QEEAQPSSVSDLSPMSMPFASNSEPAPLT. Low complexity-rich tracts occupy residues 2285–2308 and 2337–2349; these read LPSIDPSGSSPSSSSAPLASFSGI and TSASNSSTSAPPT.

The protein belongs to the mask family. In terms of assembly, interacts with PTPN11. Isoform 2 interacts with HIV-1 VPR. Interacts with NOD2. As to expression, ubiquitous with high expression in cervix, spleen and brain. Expressed in hematopoietic cells with increased expression in leukemia cells. Isoform 2 is highly expressed in spleen with almost no expression in muscle and brain.

It localises to the cytoplasm. May play a role as a scaffolding protein that may be associated with the abnormal phenotype of leukemia cells. Isoform 2 may possess an antiapoptotic effect and protect cells during normal cell survival through its regulation of caspases. In Homo sapiens (Human), this protein is Ankyrin repeat and KH domain-containing protein 1 (ANKHD1).